A 200-amino-acid chain; its full sequence is MTVVIGLTGGIASGKSTVSQMFRELSIPVIDADIIAREVVERGKPAYNKIVEVFGTEVLQEDGELDRPKLGSVVFYNEEKRLQLNKIVHPAVREEMNRQKEMYIKEGMQAVVLDIPLLFESKLTSLVDRVLVVAVKPRTQLERLMKRNDFSEEEATARIQSQMPLEEKVKRADEVINNDGTIMETKTQLEVILKNWNIID.

One can recognise a DPCK domain in the interval 4–200 (VIGLTGGIAS…VILKNWNIID (197 aa)). 12–17 (ASGKST) contacts ATP.

The protein belongs to the CoaE family.

The protein localises to the cytoplasm. The enzyme catalyses 3'-dephospho-CoA + ATP = ADP + CoA + H(+). It participates in cofactor biosynthesis; coenzyme A biosynthesis; CoA from (R)-pantothenate: step 5/5. Functionally, catalyzes the phosphorylation of the 3'-hydroxyl group of dephosphocoenzyme A to form coenzyme A. In Bacillus cereus (strain ATCC 10987 / NRS 248), this protein is Dephospho-CoA kinase.